A 346-amino-acid polypeptide reads, in one-letter code: MAQQYKFVFTAEQAASEGVTDHKKLPKLIRKARNLVKAPSKVGAVGRASSGRFYLGVNVEFKGLLPHFSIHAEQFLIANLALNSEPKLTHLAVSDNGTVFQDPCYDCTRFLKEINNAHQIEILIKNAHGRDGSFKSLESHMPDEFGSESILSAEPSLLLMERDNCLALIDEDSAAGGISSNADLCSFLKLEALKAANKSYAPYRKCPSGVALFCEGEVYAGWYIETVDRTISLGPVQAALVDFIARGEGKGFDKITGAVLVEKKDAKVGQEDTARKLLEKIAAPNCDFKVFHCQEERKDWITGAVLVEKKDAKEGQEGKLLEKIAAPNCDFKVSHCDEELKDWIKL.

CMP/dCMP-type deaminase domains lie at 20–148 (TDHK…FGSE) and 183–304 (DLCS…ITGA). Position 58–60 (58–60 (NVE)) interacts with substrate. His-71 contributes to the Zn(2+) binding site. Catalysis depends on Glu-73, which acts as the Proton donor. The Zn(2+) site is built by Cys-104 and Cys-107.

Belongs to the cytidine and deoxycytidylate deaminase family. In terms of assembly, homodimer. The cofactor is Zn(2+).

It carries out the reaction cytidine + H2O + H(+) = uridine + NH4(+). It catalyses the reaction 2'-deoxycytidine + H2O + H(+) = 2'-deoxyuridine + NH4(+). Its function is as follows. This enzyme scavenges exogenous and endogenous cytidine and 2'-deoxycytidine for UMP synthesis. The polypeptide is Cytidine deaminase 5 (CDA5) (Arabidopsis thaliana (Mouse-ear cress)).